The primary structure comprises 420 residues: Gamma-glutamyl phosphate reductase (420 aa).

This sequence belongs to the gamma-glutamyl phosphate reductase family.

It is found in the cytoplasm. It carries out the reaction L-glutamate 5-semialdehyde + phosphate + NADP(+) = L-glutamyl 5-phosphate + NADPH + H(+). It participates in amino-acid biosynthesis; L-proline biosynthesis; L-glutamate 5-semialdehyde from L-glutamate: step 2/2. Functionally, catalyzes the NADPH-dependent reduction of L-glutamate 5-phosphate into L-glutamate 5-semialdehyde and phosphate. The product spontaneously undergoes cyclization to form 1-pyrroline-5-carboxylate. The protein is Gamma-glutamyl phosphate reductase of Streptococcus pneumoniae (strain ATCC 700669 / Spain 23F-1).